We begin with the raw amino-acid sequence, 525 residues long: Beta-galactoside alpha-2,6-sialyltransferase 2 (525 aa).

Over 1-11 the chain is Cytoplasmic; the sequence is MKPHLKQWRQR. Residues 12-32 traverse the membrane as a helical; Signal-anchor for type II membrane protein segment; it reads MLFAIFVWGLLFLAIFIYFTN. At 33 to 525 the chain is on the lumenal side; it reads SNPAAPMPSS…PVTRPNNTNT (493 aa). Disordered stretches follow at residues 85 to 107 and 145 to 183; these read SASP…DGFD and RQGA…PEEA. 3 cysteine pairs are disulfide-bonded: Cys249–Cys515, Cys292–Cys444, and Cys462–Cys473. N-linked (GlcNAc...) asparagine glycans are attached at residues Asn303 and Asn333. An N-linked (GlcNAc...) asparagine glycan is attached at Asn521.

The protein belongs to the glycosyltransferase 29 family.

It localises to the golgi apparatus. Its subcellular location is the golgi stack membrane. It catalyses the reaction a beta-D-galactoside + CMP-N-acetyl-beta-neuraminate = an N-acetyl-alpha-neuraminyl-(2-&gt;6)-beta-D-galactosyl derivative + CMP + H(+). In terms of biological role, transfers sialic acid from the donor of substrate CMP-sialic acid to galactose containing acceptor substrates. Has alpha-2,6-sialyltransferase activity toward oligosaccharides that have the Gal-beta-1,4-GlcNAc sequence at the non-reducing end of their carbohydrate groups, but it has weak or no activities toward glycoproteins and glycolipids. The sequence is that of Beta-galactoside alpha-2,6-sialyltransferase 2 (St6gal2) from Rattus norvegicus (Rat).